A 481-amino-acid chain; its full sequence is WD repeat-containing protein 55 homolog (481 aa).

The disordered stretch occupies residues 1–116; the sequence is MHTHNHFKTP…NRDVETNFDL (116 aa). Acidic residues-rich tracts occupy residues 12–23, 31–46, and 68–81; these read DAEEVDDLDDEM, IEQE…DDGF, and DSFD…DSDD. 6 WD repeats span residues 144-183, 188-227, 231-269, 272-311, 314-353, and 398-437; these read KLED…NKLI, VHSK…LKKL, AHDD…HVFE, QIDD…LYVQ, PYEE…YHCD, and QHNM…DFGD.

Belongs to the WD repeat WDR55 family.

The chain is WD repeat-containing protein 55 homolog from Drosophila ananassae (Fruit fly).